Reading from the N-terminus, the 432-residue chain is Ornithine decarboxylase (432 aa).

K98 carries the N6-(pyridoxal phosphate)lysine modification. Pyridoxal 5'-phosphate contacts are provided by residues S229, G266, and 296-299 (EPGR). 341-342 (FD) is a binding site for substrate. C377 acts as the Proton donor; shared with dimeric partner in catalysis. Position 378 (D378) interacts with substrate. Y407 provides a ligand contact to pyridoxal 5'-phosphate.

It belongs to the Orn/Lys/Arg decarboxylase class-II family. In terms of assembly, homodimer. Only the dimer is catalytically active, as the active sites are constructed of residues from both monomers. The cofactor is pyridoxal 5'-phosphate.

The protein resides in the cytoplasm. The enzyme catalyses L-ornithine + H(+) = putrescine + CO2. Its pathway is amine and polyamine biosynthesis; putrescine biosynthesis via L-ornithine pathway; putrescine from L-ornithine: step 1/1. With respect to regulation, inhibited by antizyme (AZ) OAZ1 in response to polyamine levels. AZ inhibits the assembly of the functional homodimer by binding to ODC monomers and targeting them for ubiquitin-independent proteolytic destruction by the 26S proteasome. Its function is as follows. Catalyzes the first and rate-limiting step of polyamine biosynthesis that converts ornithine into putrescine, which is the precursor for the polyamines, spermidine and spermine. Polyamines are essential for cell proliferation and are implicated in cellular processes, ranging from DNA replication to apoptosis. In Schizosaccharomyces pombe (strain 972 / ATCC 24843) (Fission yeast), this protein is Ornithine decarboxylase (spe1).